Consider the following 133-residue polypeptide: 6,7-dimethyl-8-ribityllumazine synthase (133 aa).

Residues F11, 43–45 (AYD), and 67–69 (AIV) contribute to the 5-amino-6-(D-ribitylamino)uracil site. 72–73 (DT) lines the (2S)-2-hydroxy-3-oxobutyl phosphate pocket. Residue H75 is the Proton donor of the active site. F100 is a binding site for 5-amino-6-(D-ribitylamino)uracil. A (2S)-2-hydroxy-3-oxobutyl phosphate-binding site is contributed by R115.

Belongs to the DMRL synthase family.

It catalyses the reaction (2S)-2-hydroxy-3-oxobutyl phosphate + 5-amino-6-(D-ribitylamino)uracil = 6,7-dimethyl-8-(1-D-ribityl)lumazine + phosphate + 2 H2O + H(+). The protein operates within cofactor biosynthesis; riboflavin biosynthesis; riboflavin from 2-hydroxy-3-oxobutyl phosphate and 5-amino-6-(D-ribitylamino)uracil: step 1/2. In terms of biological role, catalyzes the formation of 6,7-dimethyl-8-ribityllumazine by condensation of 5-amino-6-(D-ribitylamino)uracil with 3,4-dihydroxy-2-butanone 4-phosphate. This is the penultimate step in the biosynthesis of riboflavin. The chain is 6,7-dimethyl-8-ribityllumazine synthase from Halobacterium salinarum (strain ATCC 29341 / DSM 671 / R1).